Consider the following 136-residue polypeptide: Protein NrdI (136 aa).

The protein belongs to the NrdI family.

In terms of biological role, probably involved in ribonucleotide reductase function. In Erwinia tasmaniensis (strain DSM 17950 / CFBP 7177 / CIP 109463 / NCPPB 4357 / Et1/99), this protein is Protein NrdI.